We begin with the raw amino-acid sequence, 483 residues long: MAAAEDQNPASLQPLRHSPRLRPRNGYGVYVYPNSFFRYEGEWKGGKKHGHGKLLFKDGSYYEGEFVNGEITGEGYQHWAWSGNTYSGQFVLGEPQGHGIMKYKAGGHYEGELSQGLREGQGFLEDQDGQVYQGSFHDNKRHGRGQMVFKNGDKYEGDWVRDQRQGHGVLFCADGSTYKGQWHNDVFSGLGSLVHCSGVTYCGMFINGHPAAQAKKIVVLGPELLEVVQGSPFTLSVQLQQDDGEVAKSESGRVLKISAGVRYVQLPEYSEVSFFKMDDAHMETPIQTPFGFQCIPYPLSVSTSWGLEPGSTVESARADLLLSKKDSEPVLDSEAFHGKGDTLSILPARRHEPCCSAAYQRVDQGCAEFVDIHLGAPPPGMQPYLFLPSMLEKAGNRPKGDRSPPEVLSTAQEPLRGTNRSDGTTAEPSTAAYLGEYVLMVCDVTSPPFLGHRLPTTFKHLRILARGDIHLPHVPEDHPEALS.

Ser-18 carries the phosphoserine modification. 7 MORN repeats span residues 39–61 (YEGE…DGSY), 62–84 (YEGE…WSGN), 86–108 (YSGQ…AGGH), 109–131 (YEGE…DGQV), 132–154 (YQGS…NGDK), 155–177 (YEGD…DGST), and 178–200 (YKGQ…SGVT). Positions 392-427 (EKAGNRPKGDRSPPEVLSTAQEPLRGTNRSDGTTAE) are disordered. Residues 394-404 (AGNRPKGDRSP) are compositionally biased toward basic and acidic residues. Residue Ser-403 is modified to Phosphoserine. The segment covering 418–427 (TNRSDGTTAE) has biased composition (polar residues).

The protein is MORN repeat-containing protein 1 (Morn1) of Rattus norvegicus (Rat).